A 341-amino-acid chain; its full sequence is Retinol dehydrogenase 10-B (341 aa).

A helical; Signal-anchor transmembrane segment spans residues 3 to 23 (IVLEFFLVTFRVLWAFVLAAA). 40 to 64 (LITGAGSGLGRLFALEFARRRAQLV) lines the NADP(+) pocket. Residue S197 participates in substrate binding. Y210 (proton acceptor) is an active-site residue.

It belongs to the short-chain dehydrogenases/reductases (SDR) family.

It is found in the microsome membrane. The protein localises to the endoplasmic reticulum membrane. It catalyses the reaction all-trans-retinol + NADP(+) = all-trans-retinal + NADPH + H(+). It participates in cofactor metabolism; retinol metabolism. Functionally, retinol dehydrogenase with a clear preference for NADP. Converts all-trans-retinol to all-trans-retinal. Has no detectable activity towards 11-cis-retinol, 9-cis-retinol and 13-cis-retinol. This chain is Retinol dehydrogenase 10-B (rdh10-b), found in Xenopus laevis (African clawed frog).